The primary structure comprises 482 residues: GTPase Obg (482 aa).

In terms of domain architecture, Obg spans 2–159 (PRFIDRVVVH…RELTLELKTV (158 aa)). An OBG-type G domain is found at 160-341 (ADVGLVGFPS…LIFALWDMVA (182 aa)). Residues 166–173 (GFPSAGKS), 191–195 (FTTLA), 212–215 (DVPG), 292–295 (NKID), and 322–324 (STV) each bind GTP. Residues Ser173 and Thr193 each coordinate Mg(2+). An OCT domain is found at 359-437 (PIPVDETAFS…IGDMTFDWEP (79 aa)). Residues 450–482 (RGTDVRLEQTDRVGADERKAARKARRQSDDGEE) are disordered. A compositionally biased stretch (basic and acidic residues) spans 452 to 468 (TDVRLEQTDRVGADERK).

This sequence belongs to the TRAFAC class OBG-HflX-like GTPase superfamily. OBG GTPase family. In terms of assembly, monomer. Requires Mg(2+) as cofactor.

Its subcellular location is the cytoplasm. In terms of biological role, an essential GTPase which binds GTP, GDP and possibly (p)ppGpp with moderate affinity, with high nucleotide exchange rates and a fairly low GTP hydrolysis rate. Plays a role in control of the cell cycle, stress response, ribosome biogenesis and in those bacteria that undergo differentiation, in morphogenesis control. This Mycolicibacterium gilvum (strain PYR-GCK) (Mycobacterium gilvum (strain PYR-GCK)) protein is GTPase Obg.